A 393-amino-acid polypeptide reads, in one-letter code: NAD(P)H-quinone oxidoreductase subunit H, chloroplastic (393 aa).

This sequence belongs to the complex I 49 kDa subunit family. In terms of assembly, NDH is composed of at least 16 different subunits, 5 of which are encoded in the nucleus.

It localises to the plastid. The protein localises to the chloroplast thylakoid membrane. The enzyme catalyses a plastoquinone + NADH + (n+1) H(+)(in) = a plastoquinol + NAD(+) + n H(+)(out). It catalyses the reaction a plastoquinone + NADPH + (n+1) H(+)(in) = a plastoquinol + NADP(+) + n H(+)(out). Its function is as follows. NDH shuttles electrons from NAD(P)H:plastoquinone, via FMN and iron-sulfur (Fe-S) centers, to quinones in the photosynthetic chain and possibly in a chloroplast respiratory chain. The immediate electron acceptor for the enzyme in this species is believed to be plastoquinone. Couples the redox reaction to proton translocation, and thus conserves the redox energy in a proton gradient. The polypeptide is NAD(P)H-quinone oxidoreductase subunit H, chloroplastic (Oenothera biennis (German evening primrose)).